The primary structure comprises 187 residues: Photosystem I assembly protein Ycf4 (187 aa).

Transmembrane regions (helical) follow at residues Y25 to S45 and M69 to W89.

This sequence belongs to the Ycf4 family.

It is found in the cellular thylakoid membrane. Functionally, seems to be required for the assembly of the photosystem I complex. The polypeptide is Photosystem I assembly protein Ycf4 (Trichodesmium erythraeum (strain IMS101)).